We begin with the raw amino-acid sequence, 319 residues long: Large ribosomal subunit protein uL10 (319 aa).

The interval 289–319 (EQKSAAPAAKEEAPKEDSEESDEDMGFGLFD) is disordered.

This sequence belongs to the universal ribosomal protein uL10 family. P0 forms a pentameric complex by interaction with dimers of P1 and P2. Post-translationally, phosphorylated.

The protein localises to the nucleus. It localises to the cytoplasm. In terms of biological role, ribosomal protein P0 is the functional equivalent of E.coli protein L10. The polypeptide is Large ribosomal subunit protein uL10 (rplp0) (Danio rerio (Zebrafish)).